The chain runs to 143 residues: Large ribosomal subunit protein uL11 (143 aa).

The protein belongs to the universal ribosomal protein uL11 family. As to quaternary structure, part of the ribosomal stalk of the 50S ribosomal subunit. Interacts with L10 and the large rRNA to form the base of the stalk. L10 forms an elongated spine to which L12 dimers bind in a sequential fashion forming a multimeric L10(L12)X complex. Post-translationally, one or more lysine residues are methylated.

Its function is as follows. Forms part of the ribosomal stalk which helps the ribosome interact with GTP-bound translation factors. In Kineococcus radiotolerans (strain ATCC BAA-149 / DSM 14245 / SRS30216), this protein is Large ribosomal subunit protein uL11.